A 332-amino-acid polypeptide reads, in one-letter code: 2,3-diketo-L-gulonate reductase (332 aa).

The active-site Proton donor is His-44. Residues 168 to 174, 224 to 225, and 304 to 306 each bind NAD(+); these read ITMVDMS, WK, and GHE.

It belongs to the LDH2/MDH2 oxidoreductase family. DlgD subfamily. As to quaternary structure, homodimer.

It is found in the cytoplasm. It carries out the reaction 3-dehydro-L-gulonate + NAD(+) = 2,3-dioxo-L-gulonate + NADH + H(+). The enzyme catalyses 3-dehydro-L-gulonate + NADP(+) = 2,3-dioxo-L-gulonate + NADPH + H(+). In terms of biological role, catalyzes the reduction of 2,3-diketo-L-gulonate in the presence of NADH, to form 3-keto-L-gulonate. The protein is 2,3-diketo-L-gulonate reductase of Salmonella heidelberg (strain SL476).